We begin with the raw amino-acid sequence, 464 residues long: MSEARKDTVTVVGAGLVGSLLSIYLARRGHTVELLERRPDMRRETVDGGRSINLAISTRGLHALRQVGLENEALKHAIPMRGRMIHPPQGELVYQPYGKDDSQHINAMSRGWLNAFLMTAAEATGKVRIRFKQRVTDVDFGSGALTVHDDATGEARQEPGRVVFGTDGSASAIRQALEKRPDFKGTQEQLGHGYKELTIPAGPGGAFQMEKHALHIWPRGTFMLIALPDEEGSFTCTLFLPWQGPVSFASLDTPAKLEAFFGAQFPDAKALIPDLVEAFFSRPTGSMVTVKGAPWHAGGQTLLLGDAAHAIVPFFGQGMNCGFEDCVVLDQLLGQGAGWEQVFTDFERLRKTNADAIADMAVENFVEMRDSTGDPRFLFRKAVEKVLLNAFPGEFVSRYSLVSFSHVPYRLAYQMGALTDGIVSELSEGLPRAEDVDLKRAAELIRSRLTPFMKEHADGFRTEG.

It belongs to the aromatic-ring hydroxylase family. KMO subfamily. FAD serves as cofactor.

It catalyses the reaction L-kynurenine + NADPH + O2 + H(+) = 3-hydroxy-L-kynurenine + NADP(+) + H2O. It functions in the pathway cofactor biosynthesis; NAD(+) biosynthesis; quinolinate from L-kynurenine: step 1/3. Functionally, catalyzes the hydroxylation of L-kynurenine (L-Kyn) to form 3-hydroxy-L-kynurenine (L-3OHKyn). Required for synthesis of quinolinic acid. This is Kynurenine 3-monooxygenase from Myxococcus xanthus (strain DK1622).